A 356-amino-acid polypeptide reads, in one-letter code: Glutamine synthetase (356 aa).

Residues 26–105 (IMAEYVWVDA…VLAECWNAGG (80 aa)) enclose the GS beta-grasp domain. A GS catalytic domain is found at 112-356 (FRHDCVKVMD…TKALLQFSLA (245 aa)).

Belongs to the glutamine synthetase family. As to quaternary structure, homooctamer.

The protein localises to the cytoplasm. The enzyme catalyses L-glutamate + NH4(+) + ATP = L-glutamine + ADP + phosphate + H(+). The chain is Glutamine synthetase (GLN1) from Fusarium solani subsp. phaseoli (Nectria haematococca).